We begin with the raw amino-acid sequence, 212 residues long: Ribosomal RNA small subunit methyltransferase G (212 aa).

S-adenosyl-L-methionine contacts are provided by residues Gly80, Leu85, 131–132 (VE), and Arg146.

The protein belongs to the methyltransferase superfamily. RNA methyltransferase RsmG family.

Its subcellular location is the cytoplasm. The enzyme catalyses guanosine(527) in 16S rRNA + S-adenosyl-L-methionine = N(7)-methylguanosine(527) in 16S rRNA + S-adenosyl-L-homocysteine. Functionally, specifically methylates the N7 position of guanine in position 527 of 16S rRNA. The protein is Ribosomal RNA small subunit methyltransferase G of Azoarcus sp. (strain BH72).